Here is a 439-residue protein sequence, read N- to C-terminus: O-methyltransferase aurJ (439 aa).

S-adenosyl-L-methionine is bound at residue D283. The Proton acceptor role is filled by H338.

Belongs to the class I-like SAM-binding methyltransferase superfamily. Cation-independent O-methyltransferase family. COMT subfamily.

The catalysed reaction is norrubrofusarin + S-adenosyl-L-methionine = rubrofusarin + S-adenosyl-L-homocysteine + H(+). It functions in the pathway pigment biosynthesis. O-methyltransferase; part of the gene cluster that mediates the biosynthesis of aurofusarin, a red mycelium pigment which is acting as a mycotoxin. The first step is performed by the polyketide synthase which condenses one acetyl-CoA and 6 malonyl-CoA units to form the first intermediate, the cyclic heptaketide and yellow pigment YWA1. The C2 hydroxyl group in the pyrone ring of YWA1 is probably formed during ring closure by an aldol-type cyclization reaction. The dehydratase aurZ then acts as the first tailoring enzyme in the aurofusarin biosynthetic pathway by converting YWA1 to nor-rubrofusarin. Nor-rubrofusarin is then methylated to rubrofusarin by the O-methyltransferase aurJ. Rubrofusarin is then transported across the plasma membrane by the rubrofusarin-specific pump aurT for further enzymatic processing by the extracellular complex composed of GIP1, aurF, aurO and aurS to yield aurofusarin. This is O-methyltransferase aurJ from Gibberella zeae (strain ATCC MYA-4620 / CBS 123657 / FGSC 9075 / NRRL 31084 / PH-1) (Wheat head blight fungus).